The chain runs to 303 residues: Coenzyme PQQ synthesis protein B (303 aa).

This sequence belongs to the PqqB family.

The protein operates within cofactor biosynthesis; pyrroloquinoline quinone biosynthesis. Functionally, may be involved in the transport of PQQ or its precursor to the periplasm. The protein is Coenzyme PQQ synthesis protein B of Rhizobium meliloti (strain 1021) (Ensifer meliloti).